Reading from the N-terminus, the 341-residue chain is MAVFRLSELAEQIGATLKGNADLAITSIAALNNAEPTHITFISNAKYRSQLSQSKAGAIIVTAEDVEFCQATQNLLIVKDPYLAYALLAQYMDDLPKSANEISESAVISATAKLGKNVSIGANVVIESGVELADDITIGAGCFIGKNTKIGARSHLWANISVYHNVEIGSDCLIQSSAVIGSDGFGYANDKGRWIKIPQTGGVIIGNRVEIGACTCIDRGALDPTIIEDNVIIDNLCQIAHNVHIGFGTAIAGGVILAGSLKIGRFCQIGGASVINGHMEICDGAIITGMSMIMKPITEKGVYSSGIPAQTNKEWRKTAALTMNIADMNKRLKAIEKQLTE.

Catalysis depends on His241, which acts as the Proton acceptor.

It belongs to the transferase hexapeptide repeat family. LpxD subfamily. In terms of assembly, homotrimer.

The enzyme catalyses a UDP-3-O-[(3R)-3-hydroxyacyl]-alpha-D-glucosamine + a (3R)-hydroxyacyl-[ACP] = a UDP-2-N,3-O-bis[(3R)-3-hydroxyacyl]-alpha-D-glucosamine + holo-[ACP] + H(+). It participates in bacterial outer membrane biogenesis; LPS lipid A biosynthesis. In terms of biological role, catalyzes the N-acylation of UDP-3-O-acylglucosamine using 3-hydroxyacyl-ACP as the acyl donor. Is involved in the biosynthesis of lipid A, a phosphorylated glycolipid that anchors the lipopolysaccharide to the outer membrane of the cell. The chain is UDP-3-O-acylglucosamine N-acyltransferase from Haemophilus ducreyi (strain 35000HP / ATCC 700724).